Here is a 1013-residue protein sequence, read N- to C-terminus: Probable outer membrane protein PmpG (1013 aa).

Residues 1 to 27 (MQTSFHKFFLSMILAYSCCSLSGGGYA) form the signal peptide. Residues 733–1013 (GRSYCRGLWV…GLSAGSKVRF (281 aa)) enclose the Autotransporter domain.

Belongs to the PMP outer membrane protein family.

It localises to the secreted. The protein resides in the cell wall. Its subcellular location is the cell outer membrane. The polypeptide is Probable outer membrane protein PmpG (pmpG) (Chlamydia trachomatis serovar D (strain ATCC VR-885 / DSM 19411 / UW-3/Cx)).